We begin with the raw amino-acid sequence, 269 residues long: Phosphate import ATP-binding protein PstB 2 (269 aa).

The region spanning 23 to 264 (LHTEDLHVFY…PKIQATEDYV (242 aa)) is the ABC transporter domain. ATP is bound at residue 55-62 (GPSGCGKS).

It belongs to the ABC transporter superfamily. Phosphate importer (TC 3.A.1.7) family. In terms of assembly, the complex is composed of two ATP-binding proteins (PstB), two transmembrane proteins (PstC and PstA) and a solute-binding protein (PstS).

The protein resides in the cell membrane. The enzyme catalyses phosphate(out) + ATP + H2O = ADP + 2 phosphate(in) + H(+). Functionally, part of the ABC transporter complex PstSACB involved in phosphate import. Responsible for energy coupling to the transport system. This is Phosphate import ATP-binding protein PstB 2 from Enterococcus faecalis (strain ATCC 700802 / V583).